A 400-amino-acid polypeptide reads, in one-letter code: Chalcone synthase C2 (400 aa).

Residue cysteine 168 is part of the active site.

It belongs to the thiolase-like superfamily. Chalcone/stilbene synthases family.

It catalyses the reaction (E)-4-coumaroyl-CoA + 3 malonyl-CoA + 3 H(+) = 2',4,4',6'-tetrahydroxychalcone + 3 CO2 + 4 CoA. It functions in the pathway secondary metabolite biosynthesis; flavonoid biosynthesis. Its function is as follows. The primary product of this enzyme is 4,2',4',6'-tetrahydroxychalcone (also termed naringenin-chalcone or chalcone) which can under specific conditions spontaneously isomerize into naringenin. This Zea mays (Maize) protein is Chalcone synthase C2 (C2).